Here is a 207-residue protein sequence, read N- to C-terminus: MAEYTLPDLDWDYEALEPHISGQINEIHHTKHHATYVKGVNDALAKLEEARANEDHAAIFLNEKNLAFHLGGHVNHSLWWKNLSPDGGDKPTGELAAAIDDAFGSFDKFRAQFSAAANGLQGSGWAVLGYDTLGSRLLTFQLYDQQANVPLGIIPLLQVDMWEHAFYLQYKNVKADYVKAFWNVVNWADVQKRYTAATSKTQGLIFG.

Residues histidine 28, histidine 76, aspartate 160, and histidine 164 each contribute to the Mn(2+) site.

This sequence belongs to the iron/manganese superoxide dismutase family. Requires Mn(2+) as cofactor.

It catalyses the reaction 2 superoxide + 2 H(+) = H2O2 + O2. In terms of biological role, destroys superoxide anion radicals which are normally produced within the cells and which are toxic to biological systems. In Mycobacterium lepraemurium, this protein is Superoxide dismutase [Mn] (sodA).